The chain runs to 122 residues: UPF0102 protein ECH_0093 (122 aa).

This sequence belongs to the UPF0102 family.

The sequence is that of UPF0102 protein ECH_0093 from Ehrlichia chaffeensis (strain ATCC CRL-10679 / Arkansas).